Consider the following 712-residue polypeptide: Patatin-like phospholipase domain-containing protein ACLA_029670 (712 aa).

A compositionally biased stretch (polar residues) spans 1 to 10 (MTSAEKSATR). Residues 1 to 20 (MTSAEKSATRNIYDPSALPD) are disordered. The helical transmembrane segment at 85 to 105 (WPFLFIVFAWITVLGIAYALT) threads the bilayer. The region spanning 275 to 466 (LCLSGGATFA…RTDIPIKALN (192 aa)) is the PNPLA domain. The GXSXG motif lies at 306–310 (GTSGG). Serine 308 serves as the catalytic Nucleophile. Residue aspartate 453 is the Proton acceptor of the active site. The span at 649–664 (FPERHSDYKDESHYTE) shows a compositional bias: basic and acidic residues. Residues 649 to 686 (FPERHSDYKDESHYTEVSDSLSTNSSRPHTPDARRGSI) form a disordered region. Residues 665–676 (VSDSLSTNSSRP) show a composition bias toward polar residues. Residues 677–686 (HTPDARRGSI) show a composition bias toward basic and acidic residues.

The protein belongs to the PLPL family.

The protein localises to the membrane. Functionally, probable lipid hydrolase. This Aspergillus clavatus (strain ATCC 1007 / CBS 513.65 / DSM 816 / NCTC 3887 / NRRL 1 / QM 1276 / 107) protein is Patatin-like phospholipase domain-containing protein ACLA_029670.